A 425-amino-acid chain; its full sequence is Divalent metal cation transporter MntH (425 aa).

11 helical membrane passes run 30–50 (LLPF…PGNF), 61–81 (GYML…IQSL), 107–127 (IGLW…EFIG), 134–154 (LLFG…SFAI), 167–187 (AGIA…TFFA), 209–231 (VLLA…HSAL), 255–275 (ILIA…VAAA), 294–314 (FGHL…LVAG), 344–364 (FITI…TTAL), 365–385 (VLSQ…LIMF), and 401–421 (ITVV…FLIV).

The protein belongs to the NRAMP family.

It localises to the cell membrane. Its function is as follows. H(+)-stimulated, divalent metal cation uptake system. Involved in manganese uptake. Can probably also transport cadmium, cobalt, copper and zinc, but not iron. May be the predominant transporter of manganese during logarithmic phase growth. The polypeptide is Divalent metal cation transporter MntH (Bacillus subtilis (strain 168)).